A 137-amino-acid polypeptide reads, in one-letter code: Small ribosomal subunit protein uS9 (137 aa).

Residues 106-117 (KTEGYLTRDPRA) show a composition bias toward basic and acidic residues. Positions 106–137 (KTEGYLTRDPRAKERRKYGLRKARKAPQYSKR) are disordered. The segment covering 118–137 (KERRKYGLRKARKAPQYSKR) has biased composition (basic residues).

This sequence belongs to the universal ribosomal protein uS9 family.

In Thermosynechococcus vestitus (strain NIES-2133 / IAM M-273 / BP-1), this protein is Small ribosomal subunit protein uS9.